Here is a 625-residue protein sequence, read N- to C-terminus: Endo-1,4-beta-xylanase A (625 aa).

Positions 1–19 (MKLFQIFPLLLSLTSVTLA) are cleaved as a signal peptide. One can recognise a GH11 1 domain in the interval 35-231 (VSTGHDVKKI…TGGGCSGSVE (197 aa)). The tract at residues 245–283 (DGKSKGGSSSGGSNGQGLGNGQGNGQGQGNGQGQSATGS) is disordered. A compositionally biased stretch (gly residues) spans 252-276 (SSSGGSNGQGLGNGQGNGQGQGNGQ). The tract at residues 255–279 (GGSNGQGLGNGQGNGQGQGNGQGQS) is linker. 2 repeat units span residues 259–268 (GQGLGNGQGN) and 269–278 (GQGQGNGQGQ). The tract at residues 259 to 278 (GQGLGNGQGNGQGQGNGQGQ) is 2 X 10 AA tandem repeats of G-Q-G-[LQ]-G-N-G-Q-G-[NQ]. CBM10 domains lie at 285-324 (KCPS…CGCG) and 332-371 (NCPS…CGCG). The interval 374 to 403 (NTTPTTTTKKSNNSQPTQGQSNNNSSTNTN) is linker. Residues 379-399 (TTTKKSNNSQPTQGQSNNNSS) form a disordered region. One can recognise a GH11 2 domain in the interval 416-617 (TETSNKVGSI…GSGTSGTADF (202 aa)). Catalysis depends on Glu-510, which acts as the Nucleophile. The active-site Proton donor is the Glu-603.

It belongs to the glycosyl hydrolase 11 (cellulase G) family.

It catalyses the reaction Endohydrolysis of (1-&gt;4)-beta-D-xylosidic linkages in xylans.. Its pathway is glycan degradation; xylan degradation. Functionally, hydrolyzes 1,4-beta linked polysaccharide backbones of xylans, one of the major hemicellulose components in hardwoods and softwoods. It is more active against xylopentaose than xylotetraose, has trace activity against xylotriose. The major products released from hydrolysis of xylooligosaccharides are xylobiose and xylotriose. The reiterated 40 AA domain is involved in binding the cellulase-hemicellulase complex. In Piromyces sp, this protein is Endo-1,4-beta-xylanase A (XYNA).